Consider the following 79-residue polypeptide: D-alanyl carrier protein (79 aa).

A Carrier domain is found at 1–77; it reads MDIKSEVLAI…KIVAGVTELC (77 aa). At serine 35 the chain carries O-(pantetheine 4'-phosphoryl)serine.

It belongs to the DltC family. Post-translationally, 4'-phosphopantetheine is transferred from CoA to a specific serine of apo-DCP.

Its subcellular location is the cytoplasm. It functions in the pathway cell wall biogenesis; lipoteichoic acid biosynthesis. Carrier protein involved in the D-alanylation of lipoteichoic acid (LTA). The loading of thioester-linked D-alanine onto DltC is catalyzed by D-alanine--D-alanyl carrier protein ligase DltA. The DltC-carried D-alanyl group is further transferred to cell membrane phosphatidylglycerol (PG) by forming an ester bond, probably catalyzed by DltD. D-alanylation of LTA plays an important role in modulating the properties of the cell wall in Gram-positive bacteria, influencing the net charge of the cell wall. This Streptococcus agalactiae serotype Ia (strain ATCC 27591 / A909 / CDC SS700) protein is D-alanyl carrier protein.